A 301-amino-acid polypeptide reads, in one-letter code: Mitochondrial ornithine transporter 1 (301 aa).

6 helical membrane passes run 5-25, 68-88, 110-130, 168-188, 207-227, and 237-257; these read PAIQ…ACVL, SPAL…YGFC, AAAG…TELV, GFYH…FFFF, LGPI…WLAV, and IQVL…LSIV. 3 Solcar repeats span residues 7 to 91, 104 to 197, and 207 to 293; these read IQAA…CQQV, LSDL…SRSF, and LGPI…SRKL.

The protein belongs to the mitochondrial carrier (TC 2.A.29) family. As to expression, expressed in the liver (at protein level).

Its subcellular location is the mitochondrion inner membrane. It localises to the mitochondrion membrane. It carries out the reaction L-citrulline(in) + L-ornithine(out) + H(+)(in) = L-citrulline(out) + L-ornithine(in) + H(+)(out). The enzyme catalyses L-ornithine(in) + L-arginine(out) = L-ornithine(out) + L-arginine(in). It catalyses the reaction L-ornithine(out) + L-lysine(in) = L-ornithine(in) + L-lysine(out). The catalysed reaction is L-ornithine(out) + H(+)(in) = L-ornithine(in) + H(+)(out). It carries out the reaction L-lysine(out) + H(+)(in) = L-lysine(in) + H(+)(out). Inhibited by pyridoxal 5'-phosphate as well as by mercurials (mersalyl, p-chloromercuribenzene sulfonate, and mercuric chloride), N-ethylmaleimide and spermine. Mitochondrial ornithine-citrulline antiporter. Catalyzes the exchange between cytosolic ornithine and mitochondrial citrulline plus an H(+), the proton compensates the positive charge of ornithine thus leading to an electroneutral transport. Plays a crucial role in the urea cycle, by connecting the cytosolic and the intramitochondrial reactions of the urea cycle. Lysine and arginine are also transported by the antiport mechanism. In addition, catalyzes an electroneutral exchange of ornithine or lysine for H(+), a reaction driven by the pH gradient across the inner membrane. This Rattus norvegicus (Rat) protein is Mitochondrial ornithine transporter 1 (Slc25a15).